Here is a 323-residue protein sequence, read N- to C-terminus: Lipoyl synthase (323 aa).

Residues Cys53, Cys58, Cys64, Cys79, Cys83, Cys86, and Ser293 each contribute to the [4Fe-4S] cluster site. Residues 65–282 (WTKKQATVMI…AATARAKGFS (218 aa)) form the Radical SAM core domain.

It belongs to the radical SAM superfamily. Lipoyl synthase family. Requires [4Fe-4S] cluster as cofactor.

It localises to the cytoplasm. The enzyme catalyses [[Fe-S] cluster scaffold protein carrying a second [4Fe-4S](2+) cluster] + N(6)-octanoyl-L-lysyl-[protein] + 2 oxidized [2Fe-2S]-[ferredoxin] + 2 S-adenosyl-L-methionine + 4 H(+) = [[Fe-S] cluster scaffold protein] + N(6)-[(R)-dihydrolipoyl]-L-lysyl-[protein] + 4 Fe(3+) + 2 hydrogen sulfide + 2 5'-deoxyadenosine + 2 L-methionine + 2 reduced [2Fe-2S]-[ferredoxin]. The protein operates within protein modification; protein lipoylation via endogenous pathway; protein N(6)-(lipoyl)lysine from octanoyl-[acyl-carrier-protein]: step 2/2. Its function is as follows. Catalyzes the radical-mediated insertion of two sulfur atoms into the C-6 and C-8 positions of the octanoyl moiety bound to the lipoyl domains of lipoate-dependent enzymes, thereby converting the octanoylated domains into lipoylated derivatives. The chain is Lipoyl synthase from Zymomonas mobilis subsp. mobilis (strain ATCC 31821 / ZM4 / CP4).